The primary structure comprises 701 residues: 2-isopropylmalate synthase (701 aa).

Residues 1–40 (MTTSESPDAYTESFGAHTIVKPAGPPRVGQPSWNPQRASS) are disordered. Over residues 31–40 (PSWNPQRASS) the composition is skewed to polar residues. Residues 72–346 (PLWCAVDLRD…DPQIDFSNID (275 aa)) form the Pyruvate carboxyltransferase domain. Mg(2+)-binding residues include D81, H285, H287, and N321. Residues 491 to 701 (PVRPLERIRQ…VVSAVNRAAR (211 aa)) are regulatory domain. A VNTR1 repeat occupies 575–593 (VTIASPAQPGEAGRHASDP). A disordered region spans residues 581 to 670 (AQPGEAGRHA…EAGRHASDPV (90 aa)). The VNTR2 repeat unit spans residues 594–612 (VTIASPAQPGEAGRHASDP). The stretch at 613–631 (VTIASPAQPGEAGRHASDP) is one VNTR3 repeat. One copy of the VNTR4 repeat lies at 632–650 (VTIASPAQPGEAGRHASDP). Residues 651–669 (VTIASPAQPGEAGRHASDP) form a VNTR5 repeat.

It belongs to the alpha-IPM synthase/homocitrate synthase family. LeuA type 2 subfamily. In terms of assembly, homodimer. The cofactor is Mg(2+).

Its subcellular location is the cytoplasm. It catalyses the reaction 3-methyl-2-oxobutanoate + acetyl-CoA + H2O = (2S)-2-isopropylmalate + CoA + H(+). It functions in the pathway amino-acid biosynthesis; L-leucine biosynthesis; L-leucine from 3-methyl-2-oxobutanoate: step 1/4. Catalyzes the condensation of the acetyl group of acetyl-CoA with 3-methyl-2-oxobutanoate (2-ketoisovalerate) to form 3-carboxy-3-hydroxy-4-methylpentanoate (2-isopropylmalate). This is 2-isopropylmalate synthase from Mycobacterium bovis (strain ATCC BAA-935 / AF2122/97).